Consider the following 460-residue polypeptide: tRNA modification GTPase MnmE (460 aa).

3 residues coordinate (6S)-5-formyl-5,6,7,8-tetrahydrofolate: Arg29, Glu89, and Arg128. The TrmE-type G domain maps to 224-382 (GVPTVIIGKP…LKQNLLEIIQ (159 aa)). A K(+)-binding site is contributed by Asn234. Residues 234–239 (NAGKST), 253–259 (SEIAGTT), and 278–281 (DTAG) contribute to the GTP site. Position 238 (Ser238) interacts with Mg(2+). The K(+) site is built by Ser253, Ile255, and Thr258. Mg(2+) is bound at residue Thr259. Lys460 serves as a coordination point for (6S)-5-formyl-5,6,7,8-tetrahydrofolate.

Belongs to the TRAFAC class TrmE-Era-EngA-EngB-Septin-like GTPase superfamily. TrmE GTPase family. As to quaternary structure, homodimer. Heterotetramer of two MnmE and two MnmG subunits. Requires K(+) as cofactor.

The protein resides in the cytoplasm. Exhibits a very high intrinsic GTPase hydrolysis rate. Involved in the addition of a carboxymethylaminomethyl (cmnm) group at the wobble position (U34) of certain tRNAs, forming tRNA-cmnm(5)s(2)U34. In Cytophaga hutchinsonii (strain ATCC 33406 / DSM 1761 / CIP 103989 / NBRC 15051 / NCIMB 9469 / D465), this protein is tRNA modification GTPase MnmE.